We begin with the raw amino-acid sequence, 644 residues long: Protein cueball (644 aa).

Residues 1–26 (MIRIRFGMDVLLVLLLATCLLTPAHG) form the signal peptide. Residues 27 to 531 (TPLEWDFAVT…VCLTPRVWTS (505 aa)) are Extracellular-facing. 2 N-linked (GlcNAc...) asparagine glycosylation sites follow: Asn-82 and Asn-108. LDL-receptor class B repeat units lie at residues 121–166 (MNLF…DVCR), 167–211 (RKLY…DQLS), and 212–257 (DRLF…TNDA). Residues Asn-175 and Asn-190 are each glycosylated (N-linked (GlcNAc...) asparagine). The segment at 280–301 (TTTSKPEEEDSTDSTDFTDPEP) is disordered. The segment covering 286–301 (EEEDSTDSTDFTDPEP) has biased composition (acidic residues). Asn-313 carries an N-linked (GlcNAc...) asparagine glycan. EGF-like domains follow at residues 398-430 (EIRE…FTGE) and 433-471 (ELSV…ARCE). 5 cysteine pairs are disulfide-bonded: Cys-402-Cys-411, Cys-406-Cys-421, Cys-437-Cys-447, Cys-441-Cys-459, and Cys-461-Cys-470. N-linked (GlcNAc...) asparagine glycans are attached at residues Asn-473 and Asn-508. The helical transmembrane segment at 532-552 (SVIIILVVGIVSSLLLVAVIV) threads the bilayer. Topologically, residues 553-644 (HGIRRLYKPK…LIHNMEDDLY (92 aa)) are cytoplasmic.

This sequence belongs to the cueball family.

Its subcellular location is the cell membrane. Has a role in spermatogenesis and oogenesis. The polypeptide is Protein cueball (Drosophila sechellia (Fruit fly)).